The sequence spans 339 residues: RNA polymerase principal sigma factor HrdC (339 aa).

Low complexity predominate over residues 1-10 (MAPTARTPTA). 2 disordered regions span residues 1 to 37 (MAPT…EEPD) and 71 to 101 (REEL…DGQE). The span at 91–101 (TLEETVHDGQE) shows a compositional bias: basic and acidic residues. Positions 130-143 (DVIQEGNLGLIRAV) match the Polymerase core binding motif. The segment at residues 300–319 (LQQVAQHVGLTRERVRQLEK) is a DNA-binding region (H-T-H motif).

This sequence belongs to the sigma-70 factor family. As to quaternary structure, interacts transiently with the RNA polymerase catalytic core.

Sigma factors are initiation factors that promote the attachment of RNA polymerase to specific initiation sites and are then released. The chain is RNA polymerase principal sigma factor HrdC (hrdC) from Streptomyces coelicolor (strain ATCC BAA-471 / A3(2) / M145).